The chain runs to 176 residues: 3-hydroxydecanoyl-[acyl-carrier-protein] dehydratase (176 aa).

Histidine 75 is an active-site residue.

It belongs to the thioester dehydratase family. FabA subfamily. Homodimer.

The protein resides in the cytoplasm. The enzyme catalyses a (3R)-hydroxyacyl-[ACP] = a (2E)-enoyl-[ACP] + H2O. It carries out the reaction (3R)-hydroxydecanoyl-[ACP] = (2E)-decenoyl-[ACP] + H2O. It catalyses the reaction (2E)-decenoyl-[ACP] = (3Z)-decenoyl-[ACP]. Its pathway is lipid metabolism; fatty acid biosynthesis. In terms of biological role, necessary for the introduction of cis unsaturation into fatty acids. Catalyzes the dehydration of (3R)-3-hydroxydecanoyl-ACP to E-(2)-decenoyl-ACP and then its isomerization to Z-(3)-decenoyl-ACP. Can catalyze the dehydratase reaction for beta-hydroxyacyl-ACPs with saturated chain lengths up to 16:0, being most active on intermediate chain length. The polypeptide is 3-hydroxydecanoyl-[acyl-carrier-protein] dehydratase (Haemophilus ducreyi (strain 35000HP / ATCC 700724)).